We begin with the raw amino-acid sequence, 272 residues long: Small ribosomal subunit protein mS23 (272 aa).

The tract at residues 233-272 (KENASKAAGDASAVSSEKQVEDDVVNFDESTDADQEVLHF) is disordered. Over residues 252-272 (VEDDVVNFDESTDADQEVLHF) the composition is skewed to acidic residues.

The protein belongs to the mitochondrion-specific ribosomal protein mS23 family. Component of the mitochondrial small ribosomal subunit.

The protein localises to the mitochondrion. The polypeptide is Small ribosomal subunit protein mS23 (RSM25) (Candida glabrata (strain ATCC 2001 / BCRC 20586 / JCM 3761 / NBRC 0622 / NRRL Y-65 / CBS 138) (Yeast)).